We begin with the raw amino-acid sequence, 334 residues long: Regulatory protein E2 (334 aa).

The tract at residues 1 to 127 (MYLCLESLQK…SKVLSPSVTS (127 aa)) is transactivation domain. The tract at residues 127 to 240 (SSLRVGSTGG…SSTPKRQASS (114 aa)) is disordered. Polar residues predominate over residues 229 to 240 (GRSSTPKRQASS). The interval 251 to 334 (DPPVLLLQGA…SAVKGALDGL (84 aa)) is DNA-binding domain.

Belongs to the papillomaviridae E2 protein family. Binds DNA as homodimer. Interacts with protein E1; this interaction greatly increases E1 DNA-binding activity. Interacts with protein L1; this interaction enhances E2-dependent replication and transcription activation. Interacts with protein L2; this interaction inhibits E2 transcriptional activity but not DNA replication function E2. Interacts with protein E7; this interaction inhibits E7 oncogenic activity. Interacts with host TAF1; this interaction modulates E2-dependent transcriptional regulation. Interacts with host BRD4; this interaction mediates E2 transcriptional activation function. Additionally, the interaction with host BRD4 on mitotic chromosomes mediates tethering of the viral genome. Interacts with host TOPBP1; this interaction is required for optimal viral DNA replication. In terms of processing, phosphorylated.

The protein localises to the host nucleus. Plays a role in the initiation of viral DNA replication. A dimer of E2 interacts with a dimer of E1 in order to improve specificity of E1 DNA binding activity. Once the complex recognizes and binds DNA at specific sites, the E2 dimer is removed from DNA. E2 also regulates viral transcription through binding to the E2RE response element (5'-ACCNNNNNNGGT-3') present in multiple copies in the regulatory regions of the viral genome. Activates or represses transcription depending on E2RE's position with regards to proximal promoter elements including the TATA-box. Repression occurs by sterically hindering the assembly of the transcription initiation complex. The protein is Regulatory protein E2 of Bos taurus (Bovine).